Consider the following 116-residue polypeptide: Putative pterin-4-alpha-carbinolamine dehydratase (116 aa).

It belongs to the pterin-4-alpha-carbinolamine dehydratase family.

It catalyses the reaction (4aS,6R)-4a-hydroxy-L-erythro-5,6,7,8-tetrahydrobiopterin = (6R)-L-erythro-6,7-dihydrobiopterin + H2O. The sequence is that of Putative pterin-4-alpha-carbinolamine dehydratase from Microcystis aeruginosa (strain NIES-843 / IAM M-2473).